The chain runs to 262 residues: Snake venom serine protease catroxase-1 (262 aa).

The first 18 residues, 1-18 (MVLIRVLANLLILQLSYA), serve as a signal peptide directing secretion. The propeptide occupies 19–24 (QKSSEP). Positions 25 to 250 (IIGGDECNRN…HLDWIQSIIA (226 aa)) constitute a Peptidase S1 domain. 6 disulfides stabilise this stretch: cysteine 31–cysteine 162, cysteine 49–cysteine 65, cysteine 97–cysteine 257, cysteine 141–cysteine 211, cysteine 173–cysteine 190, and cysteine 201–cysteine 226. The active-site Charge relay system is histidine 64. Asparagine 102 carries N-linked (GlcNAc...) asparagine glycosylation. The active-site Charge relay system is the aspartate 109. An N-linked (GlcNAc...) asparagine glycan is attached at asparagine 169. Serine 205 functions as the Charge relay system in the catalytic mechanism.

The protein belongs to the peptidase S1 family. Snake venom subfamily. In terms of assembly, monomer. In terms of tissue distribution, expressed by the venom gland.

Its subcellular location is the secreted. Snake venom serine protease that may act in the hemostasis system of the prey. The protein is Snake venom serine protease catroxase-1 of Crotalus atrox (Western diamondback rattlesnake).